Here is a 296-residue protein sequence, read N- to C-terminus: Fructose-bisphosphate aldolase class 1 (296 aa).

The Proton acceptor role is filled by E175. The Schiff-base intermediate with dihydroxyacetone-P role is filled by K212.

It belongs to the class I fructose-bisphosphate aldolase family.

It catalyses the reaction beta-D-fructose 1,6-bisphosphate = D-glyceraldehyde 3-phosphate + dihydroxyacetone phosphate. The protein operates within carbohydrate degradation; glycolysis; D-glyceraldehyde 3-phosphate and glycerone phosphate from D-glucose: step 4/4. The polypeptide is Fructose-bisphosphate aldolase class 1 (fda) (Staphylococcus epidermidis (strain ATCC 12228 / FDA PCI 1200)).